The following is a 190-amino-acid chain: Probable nicotinate-nucleotide adenylyltransferase (190 aa).

It belongs to the NadD family.

The catalysed reaction is nicotinate beta-D-ribonucleotide + ATP + H(+) = deamido-NAD(+) + diphosphate. It functions in the pathway cofactor biosynthesis; NAD(+) biosynthesis; deamido-NAD(+) from nicotinate D-ribonucleotide: step 1/1. Its function is as follows. Catalyzes the reversible adenylation of nicotinate mononucleotide (NaMN) to nicotinic acid adenine dinucleotide (NaAD). The sequence is that of Probable nicotinate-nucleotide adenylyltransferase from Azobacteroides pseudotrichonymphae genomovar. CFP2.